The chain runs to 389 residues: 26S proteasome non-ATPase regulatory subunit 6 (389 aa).

The 169-residue stretch at D193 to S361 folds into the PCI domain.

This sequence belongs to the proteasome subunit S10 family. Component of the 19S proteasome regulatory particle complex. The 26S proteasome consists of a 20S core particle (CP) and two 19S regulatory subunits (RP). The regulatory particle is made of a lid composed of 9 subunits including PSMD6, a base containing 6 ATPases and few additional components.

In terms of biological role, component of the 26S proteasome, a multiprotein complex involved in the ATP-dependent degradation of ubiquitinated proteins. This complex plays a key role in the maintenance of protein homeostasis by removing misfolded or damaged proteins, which could impair cellular functions, and by removing proteins whose functions are no longer required. Therefore, the proteasome participates in numerous cellular processes, including cell cycle progression, apoptosis, or DNA damage repair. The polypeptide is 26S proteasome non-ATPase regulatory subunit 6 (PSMD6) (Homo sapiens (Human)).